The primary structure comprises 283 residues: 2-dehydro-3-deoxyphosphooctonate aldolase (283 aa).

It belongs to the KdsA family.

It localises to the cytoplasm. It carries out the reaction D-arabinose 5-phosphate + phosphoenolpyruvate + H2O = 3-deoxy-alpha-D-manno-2-octulosonate-8-phosphate + phosphate. The protein operates within carbohydrate biosynthesis; 3-deoxy-D-manno-octulosonate biosynthesis; 3-deoxy-D-manno-octulosonate from D-ribulose 5-phosphate: step 2/3. Its pathway is bacterial outer membrane biogenesis; lipopolysaccharide biosynthesis. The sequence is that of 2-dehydro-3-deoxyphosphooctonate aldolase from Vibrio campbellii (strain ATCC BAA-1116).